Reading from the N-terminus, the 250-residue chain is 1-(5-phosphoribosyl)-5-[(5-phosphoribosylamino)methylideneamino] imidazole-4-carboxamide isomerase (250 aa).

Catalysis depends on aspartate 8, which acts as the Proton acceptor. Catalysis depends on aspartate 131, which acts as the Proton donor.

Belongs to the HisA/HisF family.

It is found in the cytoplasm. It carries out the reaction 1-(5-phospho-beta-D-ribosyl)-5-[(5-phospho-beta-D-ribosylamino)methylideneamino]imidazole-4-carboxamide = 5-[(5-phospho-1-deoxy-D-ribulos-1-ylimino)methylamino]-1-(5-phospho-beta-D-ribosyl)imidazole-4-carboxamide. It functions in the pathway amino-acid biosynthesis; L-histidine biosynthesis; L-histidine from 5-phospho-alpha-D-ribose 1-diphosphate: step 4/9. The protein is 1-(5-phosphoribosyl)-5-[(5-phosphoribosylamino)methylideneamino] imidazole-4-carboxamide isomerase of Paraburkholderia phymatum (strain DSM 17167 / CIP 108236 / LMG 21445 / STM815) (Burkholderia phymatum).